The following is a 344-amino-acid chain: Phosphoribosylformylglycinamidine cyclo-ligase (344 aa).

This sequence belongs to the AIR synthase family.

The protein localises to the cytoplasm. It catalyses the reaction 2-formamido-N(1)-(5-O-phospho-beta-D-ribosyl)acetamidine + ATP = 5-amino-1-(5-phospho-beta-D-ribosyl)imidazole + ADP + phosphate + H(+). The protein operates within purine metabolism; IMP biosynthesis via de novo pathway; 5-amino-1-(5-phospho-D-ribosyl)imidazole from N(2)-formyl-N(1)-(5-phospho-D-ribosyl)glycinamide: step 2/2. The polypeptide is Phosphoribosylformylglycinamidine cyclo-ligase (Neisseria meningitidis serogroup C (strain 053442)).